The primary structure comprises 267 residues: Putative carboxymethylenebutenolidase (267 aa).

Residues C137, D194, and H226 contribute to the active site.

Belongs to the dienelactone hydrolase family.

The catalysed reaction is 2-(5-oxo-2,5-dihydrofuran-2-ylidene)acetate + H2O = 4-oxohex-2-enedioate + H(+). This is Putative carboxymethylenebutenolidase from Yersinia pestis.